The following is a 274-amino-acid chain: TIP41-like protein (274 aa).

This sequence belongs to the TIP41 family.

The chain is TIP41-like protein (tiprl) from Dictyostelium discoideum (Social amoeba).